Reading from the N-terminus, the 874-residue chain is Alanine--tRNA ligase (874 aa).

Residues His561, His565, Cys663, and His667 each contribute to the Zn(2+) site.

Belongs to the class-II aminoacyl-tRNA synthetase family. It depends on Zn(2+) as a cofactor.

It localises to the cytoplasm. It carries out the reaction tRNA(Ala) + L-alanine + ATP = L-alanyl-tRNA(Ala) + AMP + diphosphate. In terms of biological role, catalyzes the attachment of alanine to tRNA(Ala) in a two-step reaction: alanine is first activated by ATP to form Ala-AMP and then transferred to the acceptor end of tRNA(Ala). Also edits incorrectly charged Ser-tRNA(Ala) and Gly-tRNA(Ala) via its editing domain. The sequence is that of Alanine--tRNA ligase from Trichodesmium erythraeum (strain IMS101).